Reading from the N-terminus, the 996-residue chain is Alanine--tRNA ligase, chloroplastic/mitochondrial (996 aa).

Residues His677, His681, Cys779, and His783 each contribute to the Zn(2+) site.

It belongs to the class-II aminoacyl-tRNA synthetase family. In terms of assembly, monomer. Zn(2+) serves as cofactor.

The protein resides in the plastid. It is found in the chloroplast. Its subcellular location is the mitochondrion. The enzyme catalyses tRNA(Ala) + L-alanine + ATP = L-alanyl-tRNA(Ala) + AMP + diphosphate. In terms of biological role, catalyzes the attachment of alanine to tRNA(Ala) in a two-step reaction: alanine is first activated by ATP to form Ala-AMP and then transferred to the acceptor end of tRNA(Ala). Also edits incorrectly charged tRNA(Ala) via its editing domain. The chain is Alanine--tRNA ligase, chloroplastic/mitochondrial from Oryza sativa subsp. indica (Rice).